Consider the following 151-residue polypeptide: UPF0208 membrane protein plu3094 (151 aa).

A run of 2 helical transmembrane segments spans residues 46 to 65 and 69 to 91; these read FGIR…QIAL and LGPA…WWLG.

Belongs to the UPF0208 family.

It localises to the cell inner membrane. The protein is UPF0208 membrane protein plu3094 of Photorhabdus laumondii subsp. laumondii (strain DSM 15139 / CIP 105565 / TT01) (Photorhabdus luminescens subsp. laumondii).